Here is a 216-residue protein sequence, read N- to C-terminus: Ribosomal RNA small subunit methyltransferase G (216 aa).

S-adenosyl-L-methionine contacts are provided by residues Gly-83, Met-88, 134 to 135, and Arg-149; that span reads VE.

It belongs to the methyltransferase superfamily. RNA methyltransferase RsmG family.

The protein resides in the cytoplasm. The enzyme catalyses guanosine(527) in 16S rRNA + S-adenosyl-L-methionine = N(7)-methylguanosine(527) in 16S rRNA + S-adenosyl-L-homocysteine. Functionally, specifically methylates the N7 position of guanine in position 527 of 16S rRNA. This Pseudomonas putida (strain GB-1) protein is Ribosomal RNA small subunit methyltransferase G.